A 228-amino-acid polypeptide reads, in one-letter code: Ribosomal RNA small subunit methyltransferase G (228 aa).

Residues Gly-89, Leu-94, 140–141 (VE), and Arg-159 contribute to the S-adenosyl-L-methionine site.

It belongs to the methyltransferase superfamily. RNA methyltransferase RsmG family.

The protein resides in the cytoplasm. It carries out the reaction guanosine(527) in 16S rRNA + S-adenosyl-L-methionine = N(7)-methylguanosine(527) in 16S rRNA + S-adenosyl-L-homocysteine. Functionally, specifically methylates the N7 position of guanine in position 527 of 16S rRNA. This Burkholderia multivorans (strain ATCC 17616 / 249) protein is Ribosomal RNA small subunit methyltransferase G.